The sequence spans 388 residues: Glucose-6-phosphate/phosphate translocator 2, chloroplastic (388 aa).

Residues 1-68 (MLSSIKPSSS…SASNFKREVK (68 aa)) constitute a chloroplast transit peptide. 8 consecutive transmembrane segments (helical) span residues 95–115 (LKIGIYFATWWALNVVFNIYN), 122–142 (FPYPWLTSTLSLACGSLMMLV), 158–178 (FWKTLFPVAVAHTIGHVAATV), 211–231 (FPLPVYLSLLPIIGGCALAAI), 233–253 (ELNFNITGFMGAMISNLAFVF), 281–301 (LVILTPFSIAVEGPQMWAAGW), 305–325 (VSQVGPNFVWWVVAQSVFYHL), and 358–378 (IIIFHTPIQPVNALGAAIAIF). Positions 113-231 (IYNKKVLNAF…IIGGCALAAI (119 aa)) constitute an EamA domain.

The protein belongs to the TPT transporter family. GPT (TC 2.A.7.9) subfamily. In terms of tissue distribution, expressed in seeds, flowers, stamens, and rosette leaves, with highest levels found in sepals and senescing leaves.

The protein localises to the plastid. Its subcellular location is the chloroplast membrane. Functionally, glucose 6-phosphate (Glc6P) transporter. Also transports inorganic phosphate, 3-phosphoglycerate, triose phosphates and, to a leser extent, phosphoenolpyruvate. Responsible for the transport of Glc6P into plastids of heterotrophic tissues where it can be used as a carbon source for starch biosynthesis, as substrate for fatty acid biosynthesis or as substrate for NADPH generation via the oxidative pentose phosphate pathway (OPPP). Required for dynamic acclimation of photosynthesis and partitioning of Glc6P between the chloroplast and the cytosol. May modulate the sensing of sugar status during early seedling development. The chain is Glucose-6-phosphate/phosphate translocator 2, chloroplastic from Arabidopsis thaliana (Mouse-ear cress).